Consider the following 491-residue polypeptide: Ketol-acid reductoisomerase (NADP(+)) (491 aa).

The KARI N-terminal Rossmann domain maps to alanine 15–serine 208. Residues cysteine 45–glutamine 48, arginine 68, arginine 76, serine 78, and aspartate 108–glutamine 110 contribute to the NADP(+) site. Histidine 132 is an active-site residue. NADP(+) is bound at residue glycine 158. 2 KARI C-terminal knotted domains span residues serine 209–glutamine 344 and tyrosine 345–methionine 484. Residues aspartate 217, glutamate 221, glutamate 389, and glutamate 393 each contribute to the Mg(2+) site. Serine 414 provides a ligand contact to substrate.

This sequence belongs to the ketol-acid reductoisomerase family. The cofactor is Mg(2+).

The enzyme catalyses (2R)-2,3-dihydroxy-3-methylbutanoate + NADP(+) = (2S)-2-acetolactate + NADPH + H(+). It catalyses the reaction (2R,3R)-2,3-dihydroxy-3-methylpentanoate + NADP(+) = (S)-2-ethyl-2-hydroxy-3-oxobutanoate + NADPH + H(+). The protein operates within amino-acid biosynthesis; L-isoleucine biosynthesis; L-isoleucine from 2-oxobutanoate: step 2/4. It participates in amino-acid biosynthesis; L-valine biosynthesis; L-valine from pyruvate: step 2/4. Its function is as follows. Involved in the biosynthesis of branched-chain amino acids (BCAA). Catalyzes an alkyl-migration followed by a ketol-acid reduction of (S)-2-acetolactate (S2AL) to yield (R)-2,3-dihydroxy-isovalerate. In the isomerase reaction, S2AL is rearranged via a Mg-dependent methyl migration to produce 3-hydroxy-3-methyl-2-ketobutyrate (HMKB). In the reductase reaction, this 2-ketoacid undergoes a metal-dependent reduction by NADPH to yield (R)-2,3-dihydroxy-isovalerate. This is Ketol-acid reductoisomerase (NADP(+)) from Escherichia coli O7:K1 (strain IAI39 / ExPEC).